Reading from the N-terminus, the 175-residue chain is MIQALTLARPYARAAFAIACEKGKCMQWSQALTFSAQVANNPIVATLLSHPQLDHEQAAALLSPEGADPAYIRFLEVIAEAHRLDVLLQVAGLYEKLRAEAQHVIKAKITSAIELAPNELNNIVTALKKRFDCEIEVTTGVDHSLIGGAVIDTGNVVIDGSIKSKLTRLQASLTH.

The protein belongs to the ATPase delta chain family. As to quaternary structure, F-type ATPases have 2 components, F(1) - the catalytic core - and F(0) - the membrane proton channel. F(1) has five subunits: alpha(3), beta(3), gamma(1), delta(1), epsilon(1). F(0) has three main subunits: a(1), b(2) and c(10-14). The alpha and beta chains form an alternating ring which encloses part of the gamma chain. F(1) is attached to F(0) by a central stalk formed by the gamma and epsilon chains, while a peripheral stalk is formed by the delta and b chains.

The protein localises to the cell inner membrane. F(1)F(0) ATP synthase produces ATP from ADP in the presence of a proton or sodium gradient. F-type ATPases consist of two structural domains, F(1) containing the extramembraneous catalytic core and F(0) containing the membrane proton channel, linked together by a central stalk and a peripheral stalk. During catalysis, ATP synthesis in the catalytic domain of F(1) is coupled via a rotary mechanism of the central stalk subunits to proton translocation. Its function is as follows. This protein is part of the stalk that links CF(0) to CF(1). It either transmits conformational changes from CF(0) to CF(1) or is implicated in proton conduction. The sequence is that of ATP synthase subunit delta from Xylella fastidiosa (strain M23).